A 31-amino-acid polypeptide reads, in one-letter code: Cytochrome b6-f complex subunit 6 (31 aa).

A helical transmembrane segment spans residues 4–24 (ITSYFGFLLAALTITSALLIG).

It belongs to the PetL family. As to quaternary structure, the 4 large subunits of the cytochrome b6-f complex are cytochrome b6, subunit IV (17 kDa polypeptide, PetD), cytochrome f and the Rieske protein, while the 4 small subunits are PetG, PetL, PetM and PetN. The complex functions as a dimer.

The protein resides in the plastid. It localises to the chloroplast thylakoid membrane. Component of the cytochrome b6-f complex, which mediates electron transfer between photosystem II (PSII) and photosystem I (PSI), cyclic electron flow around PSI, and state transitions. PetL is important for photoautotrophic growth as well as for electron transfer efficiency and stability of the cytochrome b6-f complex. The chain is Cytochrome b6-f complex subunit 6 from Magnolia grandiflora (Southern magnolia).